The sequence spans 391 residues: Ferrochelatase (391 aa).

Fe cation is bound by residues His196 and Glu281.

It belongs to the ferrochelatase family.

The protein localises to the cytoplasm. It carries out the reaction heme b + 2 H(+) = protoporphyrin IX + Fe(2+). The protein operates within porphyrin-containing compound metabolism; protoheme biosynthesis; protoheme from protoporphyrin-IX: step 1/1. Catalyzes the ferrous insertion into protoporphyrin IX. This Prochlorococcus marinus (strain MIT 9211) protein is Ferrochelatase.